The chain runs to 130 residues: Organic solute transporter subunit beta (130 aa).

The Extracellular portion of the chain corresponds to 1–35; that stretch reads MNYSEKLTGAPPMTEVPLELLEEMLWFFRVEDATP. Residues 36 to 56 form a helical membrane-spanning segment; that stretch reads WNCSMFVLAALVAIISFILLG. At 57–130 the chain is on the cytoplasmic side; sequence RNIQANRNQK…HLPDPQEPES (74 aa). The segment at 99–130 is disordered; sequence LSEKPTLAQGEMEAKCSDVPRVHLPDPQEPES. Residues 110–124 show a composition bias toward basic and acidic residues; that stretch reads MEAKCSDVPRVHLPD.

It belongs to the OST-beta family. In terms of assembly, interacts with SLC51A. The Ost-alpha/Ost-beta complex is a heterodimer composed of alpha (SLC51A) and beta (SLC51B) subunit; induces the transport of SLC51A from the endoplasmic reticulum to the plasma membrane.

It localises to the cell membrane. The catalysed reaction is taurocholate(out) = taurocholate(in). It carries out the reaction estrone 3-sulfate(out) = estrone 3-sulfate(in). The enzyme catalyses dehydroepiandrosterone 3-sulfate(out) = dehydroepiandrosterone 3-sulfate(in). It catalyses the reaction tauroursodeoxycholate(out) = tauroursodeoxycholate(in). The catalysed reaction is glycoursodeoxycholate(out) = glycoursodeoxycholate(in). It carries out the reaction glycocholate(out) = glycocholate(in). The enzyme catalyses taurochenodeoxycholate(out) = taurochenodeoxycholate(in). It catalyses the reaction glycochenodeoxycholate(out) = glycochenodeoxycholate(in). The catalysed reaction is taurodeoxycholate(out) = taurodeoxycholate(in). It carries out the reaction glycodeoxycholate(out) = glycodeoxycholate(in). The enzyme catalyses prostaglandin E2(out) = prostaglandin E2(in). In terms of biological role, essential component of the Ost-alpha/Ost-beta complex, a heterodimer that acts as the intestinal basolateral transporter responsible for bile acid export from enterocytes into portal blood. The Ost-alpha/Ost-beta complex efficiently transports the major species of bile acids (taurocholate). Taurine conjugates are transported more efficiently across the basolateral membrane than glycine-conjugated bile acids. Can also transport steroids such as estrone 3-sulfate and dehydroepiandrosterone 3-sulfate, therefore playing a role in the enterohepatic circulation of sterols. Able to transport eicosanoids such as prostaglandin E2. Modulates SLC51A glycosylation, membrane trafficking and stability activities. In Bos taurus (Bovine), this protein is Organic solute transporter subunit beta (SLC51B).